Here is a 138-residue protein sequence, read N- to C-terminus: Large-conductance mechanosensitive channel (138 aa).

Helical transmembrane passes span 15–35 (VDLA…NSIV), 38–58 (IIMP…MFIQ), and 80–100 (GNFI…FLVV).

Belongs to the MscL family. As to quaternary structure, homopentamer.

Its subcellular location is the cell inner membrane. In terms of biological role, channel that opens in response to stretch forces in the membrane lipid bilayer. May participate in the regulation of osmotic pressure changes within the cell. The chain is Large-conductance mechanosensitive channel from Brucella canis (strain ATCC 23365 / NCTC 10854 / RM-666).